We begin with the raw amino-acid sequence, 257 residues long: UPF0246 protein YaaA (257 aa).

Belongs to the UPF0246 family.

This is UPF0246 protein YaaA from Salmonella agona (strain SL483).